The sequence spans 145 residues: Secreted RxLR effector protein 43 (145 aa).

An N-terminal signal peptide occupies residues 1-20; it reads MKVTMALAALCVALQAPCIG. Positions 31–34 match the RxLR motif; it reads RHLR.

The protein belongs to the RxLR effector family.

It localises to the secreted. Its subcellular location is the host nucleus. The protein resides in the host cytoplasm. Secreted effector that completely suppresses the host cell death induced by cell death-inducing proteins. The protein is Secreted RxLR effector protein 43 of Plasmopara viticola (Downy mildew of grapevine).